Consider the following 429-residue polypeptide: Ribosomal RNA small subunit methyltransferase B (429 aa).

Residues 254 to 260 (CAAPGGK), D277, D303, and D322 each bind S-adenosyl-L-methionine. Residue C375 is the Nucleophile of the active site.

It belongs to the class I-like SAM-binding methyltransferase superfamily. RsmB/NOP family.

It localises to the cytoplasm. It carries out the reaction cytidine(967) in 16S rRNA + S-adenosyl-L-methionine = 5-methylcytidine(967) in 16S rRNA + S-adenosyl-L-homocysteine + H(+). Functionally, specifically methylates the cytosine at position 967 (m5C967) of 16S rRNA. The sequence is that of Ribosomal RNA small subunit methyltransferase B from Pectobacterium atrosepticum (strain SCRI 1043 / ATCC BAA-672) (Erwinia carotovora subsp. atroseptica).